Here is a 553-residue protein sequence, read N- to C-terminus: Protein DA1-related 1 (553 aa).

Residues glycine 10–aspartate 41 form a disordered region. Residues phenylalanine 42 to valine 61 form the UIM 1 domain. Residues isoleucine 62–glutamate 77 are compositionally biased toward basic and acidic residues. A disordered region spans residues isoleucine 62 to glutamate 91. Residues threonine 78–glutamate 91 show a composition bias toward acidic residues. Residues aspartate 87–arginine 106 enclose the UIM 2 domain. Positions alanine 122–methionine 141 constitute a UIM 3; degenerate domain. Residues glutamate 149–proline 168 form the UIM 4 domain. At serine 166 the chain carries Phosphoserine. Positions arginine 188–proline 248 constitute an LIM zinc-binding domain.

Interacts with ubiquitin, TCP14 and TCP15. In terms of processing, polyubiquitinated by DA2.

Its function is as follows. Acts redundantly with DA1 and DAR2 to regulate endoreduplication during leaf development. Together with DA1 and DAR2, modulates the protein stability of the transcription factors TCP14 and TCP15, which repress endoreduplication by directly regulating the expression of cell-cycle genes. This chain is Protein DA1-related 1, found in Arabidopsis thaliana (Mouse-ear cress).